A 1020-amino-acid chain; its full sequence is 5'-3' exoribonuclease 3 (1020 aa).

The segment at 113–144 (QQRSRRFRSAKDASDAAAEEERLREEFEREGR) is disordered. Positions 121 to 144 (SAKDASDAAAEEERLREEFEREGR) are enriched in basic and acidic residues. The CCHC-type zinc-finger motif lies at 262-279 (ERCFLCGQMGHFASNCEG). 2 disordered regions span residues 411–440 (QHQRQAERVKRDKAGKATKRMDDEAPTVQP) and 452–483 (RLASAPTPSPFQSNDGRSAPHQKVRRLSPGSS). Residues 414 to 433 (RQAERVKRDKAGKATKRMDD) are compositionally biased toward basic and acidic residues. Residues 487–523 (AIVDVENSLESDERENKEELKTKLKELIREKSDAFNS) adopt a coiled-coil conformation. Positions 831–844 (NNHGMHNNHGMHNN) are enriched in low complexity. 3 disordered regions span residues 831–859 (NNHGMHNNHGMHNNQGRQNPPGSVSGRHL), 875–897 (TDRYQTPTDVPAPGYGYNPPQYV), and 911–1020 (PGAQ…RHRY). Low complexity-rich tracts occupy residues 911–923 (PGAQGYAQPAPYQ) and 960–972 (GNHQNQHQQQQWH). A compositionally biased stretch (basic residues) spans 1000 to 1020 (RGRGRGSHHHHDQGGNPRHRY).

It belongs to the 5'-3' exonuclease family. XRN2/RAT1 subfamily. Expressed in roots, leaves, stems and flowers.

The protein resides in the nucleus. Possesses 5'-&gt;3' exoribonuclease activity. Acts as an endogenous post-transcriptional gene silencing (PTGS) suppressor. Degrades miRNA-derived loops, excised during miRNA maturation in the nucleus. Required for proper development. Involved in pre-rRNA processing. Involved with XRN2 in the 5'-end exonucleolytic processing of 5.8S and 25S rRNAs. Contributes with XRN2 to polyadenylation-dependent nuclear RNA surveillance. Involved in the degradation of aberrant polyadenylated pre-rRNA through 5'-end processing. This is 5'-3' exoribonuclease 3 from Arabidopsis thaliana (Mouse-ear cress).